A 69-amino-acid chain; its full sequence is DNA-directed RNA polymerase subunit epsilon (69 aa).

The protein belongs to the RNA polymerase subunit epsilon family. As to quaternary structure, RNAP is composed of a core of 2 alpha, a beta and a beta' subunit. The core is associated with a delta subunit, and at least one of epsilon or omega. When a sigma factor is associated with the core the holoenzyme is formed, which can initiate transcription.

The catalysed reaction is RNA(n) + a ribonucleoside 5'-triphosphate = RNA(n+1) + diphosphate. In terms of biological role, a non-essential component of RNA polymerase (RNAP). The polypeptide is DNA-directed RNA polymerase subunit epsilon (Geobacillus sp. (strain WCH70)).